The chain runs to 588 residues: Adenine deaminase (588 aa).

It belongs to the metallo-dependent hydrolases superfamily. Adenine deaminase family. Homodimer. Mn(2+) serves as cofactor.

The catalysed reaction is adenine + H2O + H(+) = hypoxanthine + NH4(+). The protein is Adenine deaminase of Escherichia coli (strain 55989 / EAEC).